Reading from the N-terminus, the 194-residue chain is Probable GTP-binding protein EngB (194 aa).

The EngB-type G domain maps to 23–194 (LNGEFVFVGR…YELIEIFGGV (172 aa)). GTP contacts are provided by residues 31–38 (GRSNVGKS), 57–61 (GKTAS), 75–78 (DLPG), 143–146 (TKMD), and 173–175 (YSA). Mg(2+)-binding residues include serine 38 and threonine 59.

Belongs to the TRAFAC class TrmE-Era-EngA-EngB-Septin-like GTPase superfamily. EngB GTPase family. The cofactor is Mg(2+).

Necessary for normal cell division and for the maintenance of normal septation. In Thermosipho africanus (strain TCF52B), this protein is Probable GTP-binding protein EngB.